The primary structure comprises 249 residues: 1-(5-phosphoribosyl)-5-[(5-phosphoribosylamino)methylideneamino] imidazole-4-carboxamide isomerase (249 aa).

Catalysis depends on Asp-8, which acts as the Proton acceptor. The active-site Proton donor is Asp-130.

It belongs to the HisA/HisF family.

The protein resides in the cytoplasm. The enzyme catalyses 1-(5-phospho-beta-D-ribosyl)-5-[(5-phospho-beta-D-ribosylamino)methylideneamino]imidazole-4-carboxamide = 5-[(5-phospho-1-deoxy-D-ribulos-1-ylimino)methylamino]-1-(5-phospho-beta-D-ribosyl)imidazole-4-carboxamide. Its pathway is amino-acid biosynthesis; L-histidine biosynthesis; L-histidine from 5-phospho-alpha-D-ribose 1-diphosphate: step 4/9. This is 1-(5-phosphoribosyl)-5-[(5-phosphoribosylamino)methylideneamino] imidazole-4-carboxamide isomerase from Nitrosococcus oceani (strain ATCC 19707 / BCRC 17464 / JCM 30415 / NCIMB 11848 / C-107).